Reading from the N-terminus, the 5085-residue chain is Protein piccolo (5085 aa).

Over residues 1 to 20 (MGNEASLEGEGLPEGLAAAA) the composition is skewed to low complexity. Disordered regions lie at residues 1-142 (MGNE…DFKE) and 173-516 (DLIS…TPAQ). Residues 92–101 (PGKPPDPGRP) show a composition bias toward pro residues. Composition is skewed to basic and acidic residues over residues 110–121 (RTTDTFRSEQKL), 132–142 (KESKSRTDFKE), and 184–198 (ETTK…EQGK). A phosphoserine mark is found at S211 and S231. The span at 227–240 (QQDSSPKSVSSQQA) shows a compositional bias: polar residues. The span at 253-268 (PSQQSPAQTPAQQASP) shows a compositional bias: low complexity. 3 stretches are compositionally biased toward polar residues: residues 275–285 (QPGSAKATVQQ), 318–332 (KTSS…SLAQ), and 375–391 (TPAQ…QQPG). The segment at 372–491 (PTKTPAQQSG…LAKPSAQQPT (120 aa)) is 12 X 10 AA tandem approximate repeats of P-A-K-P-Q-P-Q-Q-P-X. The span at 392–408 (PTKPSPQQPIPAKPQPQ) shows a compositional bias: pro residues. The span at 409 to 423 (QPVATKTQPQQSAPA) shows a compositional bias: low complexity. Pro residues predominate over residues 424 to 472 (KPQPQQPAPAKPQPQQPTPAKPQPQPPTPAKPQPQPPTATKPQPQPPTA). Over residues 486–499 (SAQQPTKSISQTVT) the composition is skewed to polar residues. Residues 523–547 (CPLCNTTELLLHIPEKANFNTCTEC) form a C4-type zinc finger. Disordered stretches follow at residues 586–880 (AAIP…TVTG), 896–1012 (LIST…ACPL), 1069–1357 (QLGD…PSDL), 1373–1604 (STLV…EELV), and 1622–1815 (TIAD…SDPE). The span at 596 to 613 (PKAATAPTATASKSPVPS) shows a compositional bias: low complexity. Residues 618–654 (PKKEPPSKQDSPKALESKKPPEPKKPPEPKKPPEPKK) are compositionally biased toward basic and acidic residues. Positions 672 to 682 (APQLPVAEALP) are enriched in low complexity. The span at 683–693 (EPAPPKEPSGP) shows a compositional bias: pro residues. Residues 705–717 (VEPKQPKMTETRA) show a composition bias toward basic and acidic residues. Residues 718 to 767 (DIQSSSTTKPDILSSQVQSQAQVKTASPLKTDSAKPSQSFPPTGEKTTPL) show a composition bias toward polar residues. Residues 790 to 808 (ESKDPKHIDPIQKKDEPKK) show a composition bias toward basic and acidic residues. 2 positions are modified to phosphoserine: S857 and S869. 3 stretches are compositionally biased toward polar residues: residues 867–878 (PKSQPTTPQETV), 896–906 (LISTAGQQGPH), and 917–936 (QAPT…STGQ). T873 is modified (phosphothreonine). Over residues 990-1004 (EPEKAVPAHKPDKTT) the composition is skewed to basic and acidic residues. Residues 1010–1033 (CPLCRTELNLGSQEPPNFNTCTEC) form a C4-type zinc finger. Residues 1077 to 1092 (PPAPSGPKASPMPAPA) show a composition bias toward pro residues. The span at 1110-1129 (KEAEGKTEAEKPVPEKETAS) shows a compositional bias: basic and acidic residues. At T1133 the chain carries Phosphothreonine. 3 stretches are compositionally biased toward basic and acidic residues: residues 1141–1150 (QKLEESEGKK), 1157–1199 (PEKK…KLPP), and 1274–1295 (SSKD…DKSD). The segment covering 1300–1318 (QQPKSPQGLSDTGYSSDGI) has biased composition (polar residues). 8 positions are modified to phosphoserine: S1304, S1314, S1315, S1344, S1346, S1349, S1350, and S1353. The segment covering 1331–1345 (SDEKDLLKGLKKDSF) has biased composition (basic and acidic residues). The segment covering 1346–1355 (SQESSPSSPS) has biased composition (low complexity). Residues 1378–1396 (EKAEKKTQPQKISPEKPQD) are compositionally biased toward basic and acidic residues. Residues 1397-1407 (QQKTQTASETL) are compositionally biased toward polar residues. Basic and acidic residues predominate over residues 1417 to 1456 (KESQEKKVSPKKDSEQGFPSRKEHKEKPELVDDLSPRRAS). S1451, S1463, S1464, S1466, S1469, S1493, S1496, S1517, and S1519 each carry phosphoserine. The segment covering 1511 to 1523 (SADEDASGSEDEE) has biased composition (acidic residues). A Phosphothreonine modification is found at T1564. S1565, S1575, and S1587 each carry phosphoserine. Residues 1578–1587 (DEDDETFDES) are compositionally biased toward acidic residues. The segment covering 1588 to 1599 (PELKFRETKSQE) has biased composition (basic and acidic residues). Polar residues predominate over residues 1622–1635 (TIADKYSSESSQKK). The span at 1640 to 1650 (FDEEPELEMES) shows a compositional bias: acidic residues. S1650 is modified (phosphoserine). T1652 is modified (phosphothreonine). Residues S1654 and S1659 each carry the phosphoserine modification. Residues 1662–1679 (EGSSSLHASSFTPGTSPT) show a composition bias toward polar residues. The span at 1719 to 1732 (DSSEEEELREEEEL) shows a compositional bias: acidic residues. 2 positions are modified to phosphoserine: S1720 and S1721. Basic and acidic residues predominate over residues 1733 to 1746 (LKEQEKQRELEQQQ). The residue at position 1772 (T1772) is a Phosphothreonine. S1778 is modified (phosphoserine). A compositionally biased stretch (basic and acidic residues) spans 1787–1802 (EELRQAAEMEELHRSS). Phosphoserine is present on residues S1807, S1812, S1820, and S1841. Disordered regions lie at residues 2116 to 2139 (PSES…SSVC), 2275 to 2385 (ELTK…PTYP), and 2456 to 2486 (KPPI…TGLS). Positions 2121 to 2139 (TSVPPSDTPSLTSSISSVC) are enriched in low complexity. Residues 2350–2384 (QPPPPPPPPPPSPSTSSPPPTPPLPPATSPKPPTY) are compositionally biased toward pro residues. Position 2511 is a phosphoserine (S2511). O-linked (GlcNAc) threonine glycosylation occurs at T2702. S2976 carries O-linked (GlcNAc) serine glycosylation. T3014 is modified (phosphothreonine). 2 disordered regions span residues 3350–3457 (KEEK…PLSK) and 3503–3572 (KTYK…LYSP). Residue S3374 is modified to Phosphoserine. Residues 3377–3386 (DDPRNLKKIV) show a composition bias toward basic and acidic residues. A Phosphoserine modification is found at S3388. A phosphothreonine mark is found at T3392 and T3419. Acidic residues predominate over residues 3419 to 3428 (TDDEDQDEWD). The segment covering 3511–3523 (GCQTETDSDTQSP) has biased composition (polar residues). S3522, S3530, S3561, S3565, S3571, S3574, S3577, S3598, S3624, S3626, and S3632 each carry phosphoserine. Disordered regions lie at residues 3602–3695 (VLHP…ASRR) and 3774–3816 (AEDR…FIPP). Composition is skewed to polar residues over residues 3647–3663 (EGFT…SGTQ) and 3679–3691 (STGT…TMGT). Residue S3781 is modified to Phosphoserine. Basic and acidic residues predominate over residues 3791 to 3803 (SRVESQHGVERPR). The segment covering 3805 to 3816 (APQTEFSQFIPP) has biased composition (polar residues). Residues S4034 and S4150 each carry the phosphoserine modification. Disordered regions lie at residues 4225–4248 (ADKP…YGLD) and 4272–4291 (VSFG…LPIS). Positions 4228 to 4248 (PYSSGSRSRPSSRPSSVYGLD) are enriched in low complexity. A compositionally biased stretch (polar residues) spans 4275–4291 (GHSSSSARTKPTSLPIS). Phosphoserine is present on residues S4304, S4308, S4311, S4340, and S4376. A disordered region spans residues 4335 to 4357 (RDQFGSSHSLPEVQQHMREESRT). The region spanning 4442–4536 (RVKITRDFKD…EAEICVRLDL (95 aa)) is the PDZ domain. Residues 4589-4638 (VEKGSHAHSGPTSAGSSSVPSPGQPGSPSVSKKKHSSTKPTDGPKAASHP) form a disordered region. Residues 4595–4618 (AHSGPTSAGSSSVPSPGQPGSPSV) are compositionally biased toward low complexity. A Phosphoserine modification is found at S4609. Positions 4639 to 4768 (ITGEIQLQIN…SHLDNTPRWY (130 aa)) constitute a C2 1 domain. The Ca(2+) site is built by D4668 and D4674. A Phosphoserine modification is found at S4723. The Ca(2+) site is built by D4738, D4740, S4743, and D4746. Disordered regions lie at residues 4775-4851 (ESID…SVAQ) and 4874-4908 (QPTK…SEGS). Composition is skewed to low complexity over residues 4783-4795 (HSSQ…PKPS) and 4822-4832 (SSPGSSKSSSE). A compositionally biased stretch (polar residues) spans 4840–4851 (PSRSQSKTSVAQ). Residues 4886 to 4908 (SSVSTGSSGSSVGSGYSVDSEGS) are compositionally biased toward low complexity. The C2 2 domain occupies 4950 to 5075 (VMGEIKLALK…DLRKRIVNWH (126 aa)).

Interacts with BSN, ERC2/CAST1, RIMS1 and UNC13A. Interacts (via C-terminus) with TRIO (via N-terminus). Interacts with CTBP1. Interacts with SIAH1; this interaction negatively regulates SIAH1 E3 ligase activity. Directly interacts with GIT1 and GIT2. Ca(2+) serves as cofactor. Expressed in brain (at protein level).

It is found in the presynaptic active zone. Scaffold protein of the presynaptic cytomatrix at the active zone (CAZ) which is the place in the synapse where neurotransmitter is released. After synthesis, participates in the formation of Golgi-derived membranous organelles termed Piccolo-Bassoon transport vesicles (PTVs) that are transported along axons to sites of nascent synaptic contacts. At the presynaptic active zone, regulates the spatial organization of synaptic vesicle cluster, the protein complexes that execute membrane fusion and compensatory endocytosis. Organizes as well the readily releasable pool of synaptic vesicles and safeguards a fraction of them to be not immediately available for action potential-induced release. Also functions in processes other than assembly such as the regulation of specific presynaptic protein ubiquitination by interacting with SIAH1 or the regulation of presynaptic autophagy. Also mediates synapse to nucleus communication leading to reconfiguration of gene expression by associating with the transcriptional corepressor CTBP1 and by subsequently reducing the size of its pool available for nuclear import. This chain is Protein piccolo (Pclo), found in Rattus norvegicus (Rat).